The following is a 208-amino-acid chain: Holliday junction resolvase RecU (208 aa).

The interval 1–25 (MNYPNGKPFNRNKTKVGRTNDHKSS) is disordered. 4 residues coordinate Mg(2+): Thr87, Asp89, Glu102, and Gln121.

This sequence belongs to the RecU family. Mg(2+) serves as cofactor.

The protein resides in the cytoplasm. It carries out the reaction Endonucleolytic cleavage at a junction such as a reciprocal single-stranded crossover between two homologous DNA duplexes (Holliday junction).. Functionally, endonuclease that resolves Holliday junction intermediates in genetic recombination. Cleaves mobile four-strand junctions by introducing symmetrical nicks in paired strands. Promotes annealing of linear ssDNA with homologous dsDNA. Required for DNA repair, homologous recombination and chromosome segregation. In Staphylococcus carnosus (strain TM300), this protein is Holliday junction resolvase RecU.